The primary structure comprises 993 residues: DNA-binding protein SMUBP-2 (993 aa).

Position 2 is an N-acetylalanine (Ala2). ATP is bound by residues 214–221 (GPPGTGKT), Gln403, Tyr442, and Glu571. The tract at residues 638 to 785 (TAFEYLDDIV…KRRFITVSKR (148 aa)) is SS DNA-binding. Disordered stretches follow at residues 651 to 723 (YSHE…VESQ), 782 to 828 (VSKR…PDQP), and 841 to 879 (VRSA…DLPT). Composition is skewed to polar residues over residues 653-662 (HENSQGSSHA) and 669-681 (PATS…QRQE). Residues 723 to 786 (QDGVDHFRAM…RRFITVSKRA (64 aa)) enclose the R3H domain. Positions 818-828 (PPREQRGPDQP) are enriched in basic and acidic residues. Positions 842-859 (RSAQGQPASKEQQASGQQ) are enriched in polar residues. The short motif at 864–868 (KKKKK) is the Nuclear localization signal element. The AN1-type zinc-finger motif lies at 891–940 (VKADNTCGFAKCTAGVTTLGQFCQLCSRRYCLSHHLPEIHGCGERARAHA). Residues Cys897, Cys902, Cys913, Cys916, Cys921, His924, His930, and Cys932 each coordinate Zn(2+). The interval 971 to 993 (RRLDKKLSELSNQRTSRRKERGT) is disordered.

It belongs to the DNA2/NAM7 helicase family. As to quaternary structure, homooligomer. Interacts with RUVBL1. Interacts with RUVBL2. Interacts with GTF3C1. Interacts with ABT1. Interacts with ribosomes. In terms of tissue distribution, expressed in all tissues examined. Expressed in the developing and adult human brain, with highest expression in the cerebellum. Moderately expressed in fibroblasts.

It is found in the nucleus. The protein localises to the cytoplasm. The protein resides in the cell projection. It localises to the axon. It catalyses the reaction ATP + H2O = ADP + phosphate + H(+). Functionally, 5' to 3' helicase that unwinds RNA and DNA duplexes in an ATP-dependent reaction. Specific to 5'-phosphorylated single-stranded guanine-rich sequences. May play a role in RNA metabolism, ribosome biogenesis or initiation of translation. May play a role in regulation of transcription. Interacts with tRNA-Tyr. The polypeptide is DNA-binding protein SMUBP-2 (IGHMBP2) (Homo sapiens (Human)).